We begin with the raw amino-acid sequence, 62 residues long: Snaclec aspercetin subunit alpha (62 aa).

Residues cysteine 2 and cysteine 13 are joined by a disulfide bond. The C-type lectin domain maps to 9–62 (YEGHCYRFFHPPKDWADAERFCTEQAKGGALVSIQRFGEEDFVSNLITKNLQRG).

The protein belongs to the snaclec family. Heterodimer; disulfide-linked. In terms of tissue distribution, expressed by the venom gland.

Its subcellular location is the secreted. Functionally, snaclec that binds to von Willebrand factor (VWF) and induces its interaction with GPIbalpha (GP1BA) (via the vWF A1 domain), resulting in platelet aggregation. Intravenous injection in mice induces a dose-dependent drop in platelet count (thrombocytopenia). Pretreatment by intravenous injection by this protein in mice potentiates the hemorrhagic lesion in the skin provoked by the metalloproteinase BaP1 intradermally injected. This result is not observed when both BaP1 and this protein are injected simultaneously. This Bothrops asper (Terciopelo) protein is Snaclec aspercetin subunit alpha.